Here is a 280-residue protein sequence, read N- to C-terminus: Delta(3,5)-Delta(2,4)-dienoyl-CoA isomerase (280 aa).

Residue E154 is the Proton donor/acceptor of the active site. A Peroxisome targeting signal (PTS1) motif is present at residues 278–280 (HKL).

Belongs to the enoyl-CoA hydratase/isomerase family.

The protein resides in the cytoplasm. It is found in the cytosol. The protein localises to the peroxisome. It carries out the reaction a (3E,5Z)-dienoyl-CoA = a (2E,4E)-(5,6-saturated)-dienoyl-CoA. It participates in lipid metabolism; fatty acid beta-oxidation. Peroxisomal di-isomerase that is involved in fatty acid metabolism enzyme by converting 3,5-dienoyl-CoAs to the corresponding 2,4-dienoyl-CoAs. Involved in fatty acid beta-oxidation, which is important for lipid droplets degradation and infectious growth. This Pyricularia oryzae (strain 70-15 / ATCC MYA-4617 / FGSC 8958) (Rice blast fungus) protein is Delta(3,5)-Delta(2,4)-dienoyl-CoA isomerase.